The following is a 197-amino-acid chain: Ras-like protein rasB (197 aa).

13 to 20 contacts GTP; it reads GGGGVGKS. The short motif at 35–43 is the Effector region element; the sequence is YDPTIEDSY. Residues 60-64 and 119-122 each bind GTP; these read DTAGQ and NKCD. Residue cysteine 194 is modified to Cysteine methyl ester. A lipid anchor (S-geranylgeranyl cysteine) is attached at cysteine 194. The propeptide at 195-197 is removed in mature form; that stretch reads LIL.

The protein belongs to the small GTPase superfamily. Ras family.

It is found in the cell membrane. The enzyme catalyses GTP + H2O = GDP + phosphate + H(+). Alternates between an inactive form bound to GDP and an active form bound to GTP. Activated by a guanine nucleotide-exchange factor (GEF) and inactivated by a GTPase-activating protein (GAP). In terms of biological role, ras proteins bind GDP/GTP and possess intrinsic GTPase activity. The sequence is that of Ras-like protein rasB (rasB) from Dictyostelium discoideum (Social amoeba).